We begin with the raw amino-acid sequence, 461 residues long: MADDQDLSEVEMSPVGSEDHHCLSPGPSMASDNSSHLASSGNGEMGKVKKEQQDSEADDDKFPVCIREAVSQVLSGYDWTLVPMPVRVNGSNKSKPHVKRPMNAFMVWAQAARRKLADQYPHLHNAELSKTLGKLWRLLNESDKRPFIEEAERLRMQHKKDHPDYKYQPRRRKNGKATQGEGEGQVEGEAGGAASIQAHYKNAHLDHRHPGEGSPMSDGHPEHSSGQSHGPPTPPTTPKTELQAGKADSKREGRSLGEGGKPHIDFGNVDIGEISHEVMSNMETFDVNEFDQYLPPNGHAGHPGHVGGYAAAAGYGLGSALAAASGHSAWISKQHGVSLSATTSPVVDSKAQVKTEGSAPGGHYTDQPSTSQIAYTSLSLPHYGSAFPSISRPQFDYPDHQPSGPYYSHSSQASGLYSAFSYMGPSQRPLYTAISDPAPSVPQSHSPTHWEQPVYTTLSRP.

5 disordered regions span residues 1-60 (MADD…ADDD), 154-191 (LRMQHKKDHPDYKYQPRRRKNGKATQGEGEGQVEGEAG), 205-268 (LDHR…DFGN), 350-369 (KAQVKTEGSAPGGHYTDQPS), and 433-461 (AISDPAPSVPQSHSPTHWEQPVYTTLSRP). Positions 30 to 42 (ASDNSSHLASSGN) are enriched in polar residues. The dimerization (DIM) stretch occupies residues 56-96 (EADDDKFPVCIREAVSQVLSGYDWTLVPMPVRVNGSNKSKP). The HMG box DNA-binding region spans 98 to 166 (VKRPMNAFMV…QHKKDHPDYK (69 aa)). Basic and acidic residues predominate over residues 154 to 167 (LRMQHKKDHPDYKY). Over residues 181–191 (EGEGQVEGEAG) the composition is skewed to gly residues. The interval 221-306 (PEHSSGQSHG…NGHAGHPGHV (86 aa)) is transactivation domain (TAM). The span at 247 to 264 (ADSKREGRSLGEGGKPHI) shows a compositional bias: basic and acidic residues. A transactivation domain (TAC) region spans residues 350-461 (KAQVKTEGSA…QPVYTTLSRP (112 aa)). Residues 441–461 (VPQSHSPTHWEQPVYTTLSRP) are compositionally biased toward polar residues.

It is found in the cytoplasm. Its subcellular location is the nucleus. Functionally, transcription factor that plays a central role in developing and mature glia. Specifically activates expression of myelin genes, during oligodendrocyte (OL) maturation, thereby playing a central role in oligodendrocyte maturation and CNS myelination. The sequence is that of Transcription factor SOX-10 (SOX10) from Gallus gallus (Chicken).